A 661-amino-acid polypeptide reads, in one-letter code: Acyl-coenzyme A oxidase acox-1.2 (661 aa).

Residues 147-150 (YAQT), 155-156 (GS), and glycine 189 contribute to the FAD site. Substrate-binding positions include 283-286 (KIGY) and arginine 293. Residues arginine 318 and 338–341 (QQHR) each bind FAD. 4 residues coordinate ATP: histidine 340, serine 390, histidine 394, and glutamine 402. Residue glycine 409 participates in FAD binding. Substrate is bound at residue 431-432 (YE). Residue glutamate 432 is the Proton acceptor of the active site. Glutamate 434 lines the FAD pocket. ATP is bound by residues 525–528 (RASR) and tyrosine 573. Positions 659 to 661 (AKL) match the Microbody targeting signal motif.

It belongs to the acyl-CoA oxidase family. As to quaternary structure, homodimer. Forms a heterodimer with acox-1.1. It depends on FAD as a cofactor.

The protein resides in the peroxisome. It carries out the reaction asc-omegaC5-CoA + O2 = asc-omegaDeltaC5-CoA + H2O2. It participates in lipid metabolism; peroxisomal fatty acid beta-oxidation. Its activity is regulated as follows. Activated by ATP. ATP binding leads to a conformational change that promotes FAD cofactor binding and enzyme activity. ATP binding likely occurs during acox-1.2 folding and/or dimer formation. The preference for processing substrates with shorter fatty acid chains is likely due to the closed conformation of the active site. Involved in the first step of peroxisomal beta-oxidation by catalyzing the desaturation of fatty acid-derived side chains of ascaroside pheromones, which regulates development and behavior. Specifically, shortens ascarosides with 5-carbon omega side chain (asc-omega-C5). Does not shorten indol-3-carbonyl(IC)-ascaroside with 7-carbon or 9-carbon side chains. Does not catalyze the desaturation of fatty acids or hydroxylated fatty acids. The sequence is that of Acyl-coenzyme A oxidase acox-1.2 from Caenorhabditis elegans.